The primary structure comprises 118 residues: MLVIFLGILGLLASQVSSQLVGQLRPTEDPPEEELEYWCAYMESCQFCWDCQDGTCINKIDGSAIYKNEYVKACLVSRWLDKCMYDLDKGIYHTMNCSQPWSWNPYKYFRKEWKKDEL.

Residues 1–18 (MLVIFLGILGLLASQVSS) form the signal peptide. N-linked (GlcNAc...) asparagine; by host glycosylation occurs at Asn-96. Residues 115 to 118 (KDEL) carry the Prevents secretion from ER motif.

The protein belongs to the asfivirus MGF 110 family. N-glycosylated.

The protein localises to the host endoplasmic reticulum lumen. Its function is as follows. Plays a role in virus cell tropism, and may be required for efficient virus replication in macrophages. In African swine fever virus (strain Badajoz 1971 Vero-adapted) (Ba71V), this protein is Protein MGF 110-6L.